We begin with the raw amino-acid sequence, 533 residues long: D-3-phosphoglycerate dehydrogenase (533 aa).

Residue Ala2 is modified to N-acetylalanine. The residue at position 14 (Ser14) is a Phosphoserine. Lys21 bears the N6-acetyllysine; alternate mark. A Glycyl lysine isopeptide (Lys-Gly) (interchain with G-Cter in SUMO1); alternate cross-link involves residue Lys21. A Glycyl lysine isopeptide (Lys-Gly) (interchain with G-Cter in SUMO2); alternate cross-link involves residue Lys21. Residue Lys58 is modified to N6-acetyllysine. Residues Thr78, 155 to 156, Asp175, Thr207, 234 to 236, and Asp260 contribute to the NAD(+) site; these read RI and CAR. Thr78 carries the post-translational modification Phosphothreonine. The active site involves Arg236. Glu265 is a catalytic residue. His283 (proton donor) is an active-site residue. 283-286 contacts NAD(+); the sequence is HLGA.

Belongs to the D-isomer specific 2-hydroxyacid dehydrogenase family. Homotetramer.

The enzyme catalyses (2R)-3-phosphoglycerate + NAD(+) = 3-phosphooxypyruvate + NADH + H(+). It carries out the reaction (R)-2-hydroxyglutarate + NAD(+) = 2-oxoglutarate + NADH + H(+). It catalyses the reaction (S)-malate + NAD(+) = oxaloacetate + NADH + H(+). The protein operates within amino-acid biosynthesis; L-serine biosynthesis; L-serine from 3-phospho-D-glycerate: step 1/3. Functionally, catalyzes the reversible oxidation of 3-phospho-D-glycerate to 3-phosphonooxypyruvate, the first step of the phosphorylated L-serine biosynthesis pathway. Also catalyzes the reversible oxidation of 2-hydroxyglutarate to 2-oxoglutarate and the reversible oxidation of (S)-malate to oxaloacetate. The chain is D-3-phosphoglycerate dehydrogenase (PHGDH) from Pan troglodytes (Chimpanzee).